We begin with the raw amino-acid sequence, 201 residues long: ATP-dependent Clp protease proteolytic subunit (201 aa).

Serine 98 acts as the Nucleophile in catalysis. Residue histidine 123 is part of the active site.

This sequence belongs to the peptidase S14 family. As to quaternary structure, fourteen ClpP subunits assemble into 2 heptameric rings which stack back to back to give a disk-like structure with a central cavity, resembling the structure of eukaryotic proteasomes.

Its subcellular location is the cytoplasm. It carries out the reaction Hydrolysis of proteins to small peptides in the presence of ATP and magnesium. alpha-casein is the usual test substrate. In the absence of ATP, only oligopeptides shorter than five residues are hydrolyzed (such as succinyl-Leu-Tyr-|-NHMec, and Leu-Tyr-Leu-|-Tyr-Trp, in which cleavage of the -Tyr-|-Leu- and -Tyr-|-Trp bonds also occurs).. Functionally, cleaves peptides in various proteins in a process that requires ATP hydrolysis. Has a chymotrypsin-like activity. Plays a major role in the degradation of misfolded proteins. This is ATP-dependent Clp protease proteolytic subunit from Desulfatibacillum aliphaticivorans.